We begin with the raw amino-acid sequence, 271 residues long: UPF0328 protein ECU09_0020 (271 aa).

This sequence belongs to the UPF0328 family.

The polypeptide is UPF0328 protein ECU09_0020 (Encephalitozoon cuniculi (strain GB-M1) (Microsporidian parasite)).